A 438-amino-acid chain; its full sequence is sn-glycerol-3-phosphate-binding periplasmic protein UgpB (438 aa).

An N-terminal signal peptide occupies residues 1 to 23 (MKPLHYTASALALGLALMGNAQA). Sn-glycerol 3-phosphate is bound by residues Tyr65, Glu89, Ser144, Ser270, Gly307, Tyr346, and Arg397.

This sequence belongs to the bacterial solute-binding protein 1 family. In terms of assembly, the complex is composed of two ATP-binding proteins (UgpC), two transmembrane proteins (UgpA and UgpE) and a solute-binding protein (UgpB).

It is found in the periplasm. Part of the ABC transporter complex UgpBAEC involved in sn-glycerol-3-phosphate (G3P) import. Binds G3P. The sequence is that of sn-glycerol-3-phosphate-binding periplasmic protein UgpB (ugpB) from Escherichia coli O157:H7.